We begin with the raw amino-acid sequence, 197 residues long: TATA-box-binding protein (197 aa).

2 tandem repeats follow at residues 10–86 (IENI…VKLL) and 101–177 (IQNI…YNQL).

This sequence belongs to the TBP family.

In terms of biological role, general factor that plays a role in the activation of archaeal genes transcribed by RNA polymerase. Binds specifically to the TATA box promoter element which lies close to the position of transcription initiation. This chain is TATA-box-binding protein, found in Pyrobaculum neutrophilum (strain DSM 2338 / JCM 9278 / NBRC 100436 / V24Sta) (Thermoproteus neutrophilus).